A 366-amino-acid chain; its full sequence is tRNA N6-adenosine threonylcarbamoyltransferase (366 aa).

Fe cation contacts are provided by histidine 119 and histidine 123. Substrate contacts are provided by residues 142-146, aspartate 175, glycine 188, aspartate 192, and asparagine 281; that span reads LVSGG. Aspartate 309 lines the Fe cation pocket.

It belongs to the KAE1 / TsaD family. It depends on Fe(2+) as a cofactor.

The protein localises to the cytoplasm. The catalysed reaction is L-threonylcarbamoyladenylate + adenosine(37) in tRNA = N(6)-L-threonylcarbamoyladenosine(37) in tRNA + AMP + H(+). Functionally, required for the formation of a threonylcarbamoyl group on adenosine at position 37 (t(6)A37) in tRNAs that read codons beginning with adenine. Is involved in the transfer of the threonylcarbamoyl moiety of threonylcarbamoyl-AMP (TC-AMP) to the N6 group of A37, together with TsaE and TsaB. TsaD likely plays a direct catalytic role in this reaction. The protein is tRNA N6-adenosine threonylcarbamoyltransferase of Synechococcus sp. (strain JA-3-3Ab) (Cyanobacteria bacterium Yellowstone A-Prime).